Here is a 333-residue protein sequence, read N- to C-terminus: Probable tRNA pseudouridine synthase B (333 aa).

Asp-66 acts as the Nucleophile in catalysis. Positions 233–308 (LKKIIVKDSA…EVVEITRVIM (76 aa)) constitute a PUA domain.

The protein belongs to the pseudouridine synthase TruB family. Type 2 subfamily.

The catalysed reaction is uridine(55) in tRNA = pseudouridine(55) in tRNA. In terms of biological role, could be responsible for synthesis of pseudouridine from uracil-55 in the psi GC loop of transfer RNAs. The sequence is that of Probable tRNA pseudouridine synthase B from Methanococcus maripaludis (strain C5 / ATCC BAA-1333).